The primary structure comprises 88 residues: Small ribosomal subunit protein bS20 (88 aa).

Belongs to the bacterial ribosomal protein bS20 family.

Its function is as follows. Binds directly to 16S ribosomal RNA. In Methylorubrum extorquens (strain CM4 / NCIMB 13688) (Methylobacterium extorquens), this protein is Small ribosomal subunit protein bS20.